The following is a 438-amino-acid chain: tRNA wybutosine-synthesizing protein 2 homolog (438 aa).

S-adenosyl-L-methionine contacts are provided by residues serine 209, lysine 216, glutamate 256, and 284 to 285 (DN).

The protein belongs to the class I-like SAM-binding methyltransferase superfamily. TRM5/TYW2 family.

The enzyme catalyses 4-demethylwyosine(37) in tRNA(Phe) + S-adenosyl-L-methionine = 4-demethyl-7-[(3S)-3-amino-3-carboxypropyl]wyosine(37) in tRNA(Phe) + S-methyl-5'-thioadenosine + H(+). It participates in tRNA modification; wybutosine-tRNA(Phe) biosynthesis. In terms of biological role, S-adenosyl-L-methionine-dependent transferase that acts as a component of the wybutosine biosynthesis pathway. Wybutosine is a hyper modified guanosine with a tricyclic base found at the 3'-position adjacent to the anticodon of eukaryotic phenylalanine tRNA. Catalyzes the transfer of the alpha-amino-alpha-carboxypropyl (acp) group from S-adenosyl-L-methionine to the C-7 position of 4-demethylwyosine (imG-14) to produce wybutosine-86. This is tRNA wybutosine-synthesizing protein 2 homolog (TRMT12) from Bos taurus (Bovine).